The following is a 784-amino-acid chain: Cyclin-dependent kinase 11B (784 aa).

Basic and acidic residues predominate over residues 18–60; that stretch reads QEKKRRKEQEEKAEIKRLKNSDDRDSKRDSLEEGELRDHRMEI. The tract at residues 18 to 401 is disordered; that stretch reads QEKKRRKEQE…EGDYVPDSPA (384 aa). Phosphoserine is present on residues Ser-47 and Ser-72. Residues 95–113 are compositionally biased toward basic residues; the sequence is EKAHHRKDEKRKEKRRHRS. 3 stretches are compositionally biased toward basic and acidic residues: residues 114-131, 138-227, and 238-263; these read HSAE…EREH, REEQ…DKGK, and PPRE…RDLL. Position 115 is a phosphoserine (Ser-115). At Ser-270 the chain carries Phosphoserine. Positions 278 to 289 are enriched in low complexity; that stretch reads SAESSSAESGSG. 2 stretches are compositionally biased toward acidic residues: residues 290-353 and 372-381; these read SEEE…EDRE and DSEEGEEEVG. A Protein kinase domain is found at 427–712; it reads FQCLNRIEEG…AEDGLKHEYF (286 aa). Residues 433-441 and Lys-456 contribute to the ATP site; that span reads IEEGTYGVV. Ser-471 is subject to Phosphoserine; by CDK7. Thr-477 carries the post-translational modification Phosphothreonine; by CDK7. Residue Asp-551 is the Proton acceptor of the active site. Residue Ser-578 is modified to Phosphoserine. Position 583 is a phosphotyrosine (Tyr-583). Thr-584 is subject to Phosphothreonine. A Glycyl lysine isopeptide (Lys-Gly) (interchain with G-Cter in SUMO2) cross-link involves residue Lys-630. A disordered region spans residues 722–784; it reads SMFPTWPAKS…AAGPGFSLKF (63 aa). The residue at position 740 (Thr-740) is a Phosphothreonine. Ser-741 carries the post-translational modification Phosphoserine.

Belongs to the protein kinase superfamily. CMGC Ser/Thr protein kinase family. CDC2/CDKX subfamily. In terms of assembly, may interact PAK1 and RANBP9. p110C interacts with RNPS1. Interacts with CCND3. Interacts with CCNL1 and CCNL2. Forms complexes with pre-mRNA-splicing factors, including at least SRSF1, SRSF2 AND SRSF7/SLU7. Requires Mg(2+) as cofactor. In terms of processing, phosphorylation at Ser-115 creates a binding site for 14-3-3 proteins.

It catalyses the reaction L-seryl-[protein] + ATP = O-phospho-L-seryl-[protein] + ADP + H(+). It carries out the reaction L-threonyl-[protein] + ATP = O-phospho-L-threonyl-[protein] + ADP + H(+). With respect to regulation, phosphorylation at Thr-437 or Tyr-438 inactivates the enzyme, while phosphorylation at Thr-584 activates it. Functionally, plays multiple roles in cell cycle progression, cytokinesis and apoptosis. Involved in pre-mRNA splicing in a kinase activity-dependent manner. May act as a negative regulator of normal cell cycle progression. This Mus musculus (Mouse) protein is Cyclin-dependent kinase 11B (Cdk11b).